Consider the following 290-residue polypeptide: Nucleotide-binding protein FN1089 (290 aa).

Residue 11–18 (GLSGAGKT) coordinates ATP. 56–59 (DIRT) serves as a coordination point for GTP.

Belongs to the RapZ-like family.

Functionally, displays ATPase and GTPase activities. In Fusobacterium nucleatum subsp. nucleatum (strain ATCC 25586 / DSM 15643 / BCRC 10681 / CIP 101130 / JCM 8532 / KCTC 2640 / LMG 13131 / VPI 4355), this protein is Nucleotide-binding protein FN1089.